The sequence spans 383 residues: 1-deoxy-D-xylulose 5-phosphate reductoisomerase (383 aa).

NADPH contacts are provided by threonine 10, glycine 11, serine 12, isoleucine 13, asparagine 38, and asparagine 121. Lysine 122 serves as a coordination point for 1-deoxy-D-xylulose 5-phosphate. An NADPH-binding site is contributed by glutamate 123. Aspartate 147 contacts Mn(2+). 1-deoxy-D-xylulose 5-phosphate contacts are provided by serine 148, glutamate 149, serine 172, and histidine 195. Glutamate 149 serves as a coordination point for Mn(2+). Glycine 201 serves as a coordination point for NADPH. The 1-deoxy-D-xylulose 5-phosphate site is built by serine 208, asparagine 213, lysine 214, and glutamate 217. Glutamate 217 contacts Mn(2+).

Belongs to the DXR family. Mg(2+) serves as cofactor. The cofactor is Mn(2+).

It carries out the reaction 2-C-methyl-D-erythritol 4-phosphate + NADP(+) = 1-deoxy-D-xylulose 5-phosphate + NADPH + H(+). It participates in isoprenoid biosynthesis; isopentenyl diphosphate biosynthesis via DXP pathway; isopentenyl diphosphate from 1-deoxy-D-xylulose 5-phosphate: step 1/6. Catalyzes the NADPH-dependent rearrangement and reduction of 1-deoxy-D-xylulose-5-phosphate (DXP) to 2-C-methyl-D-erythritol 4-phosphate (MEP). The chain is 1-deoxy-D-xylulose 5-phosphate reductoisomerase from Ruthia magnifica subsp. Calyptogena magnifica.